Here is a 237-residue protein sequence, read N- to C-terminus: Regulator of G-protein signaling 9-binding protein (237 aa).

Over 1-214 the chain is Cytoplasmic; sequence MAKEECKALL…TGPCDLSKAK (214 aa). Coiled-coil stretches lie at residues 29 to 58 and 144 to 169; these read GSAD…RLRL and VEDL…MKVN. The tract at residues 153–202 is SNARE-like; sequence EILQVGEMIQDMEMKVNVPRWTVQARQAAGAELLSSASAGVSSVGGVSVE. Residues 215-234 form a helical; Anchor for type IV membrane protein membrane-spanning segment; sequence AATIFSAVLLAAVALAVCVA. Topologically, residues 235 to 237 are extracellular; that stretch reads KLS.

Belongs to the RGS7BP/RGS9BP family. Specifically interacts with isoform RGS9-1 of RGS9. Component of the RGS9-1-Gbeta5 complex composed of RGS9-1, Gbeta5 (GNB5) and RGS9BP. As to expression, specifically expressed in the retina. Only present in photoreceptors (at protein level).

The protein resides in the membrane. Regulator of G protein-coupled receptor (GPCR) signaling in phototransduction. Participates in the recovery phase of visual transduction via its interaction with RGS9-1 isoform. Acts as a membrane-anchor that mediates the targeting of RGS9-1 to the photoreceptor outer segment, where phototransduction takes place. Enhances the ability of RGS9-1 to stimulate G protein GTPase activity, allowing the visual signal to be terminated on the physiologically time scale. It also controls the proteolytic stability of RGS9-1, probably by protecting it from degradation. This Bos taurus (Bovine) protein is Regulator of G-protein signaling 9-binding protein (RGS9BP).